The primary structure comprises 520 residues: O-methyltransferase cicE (520 aa).

Residues 300–301 (GG), aspartate 323, 355–356 (NF), and arginine 371 contribute to the S-adenosyl-L-methionine site.

This sequence belongs to the class I-like SAM-binding methyltransferase superfamily. Cation-independent O-methyltransferase family.

It participates in phytotoxin biosynthesis. In terms of biological role, O-methyltransferase; part of the gene cluster that mediates the biosynthesis of cichorine, a phytotoxin active against knapweed, corn, and soybeans. The first step in the pathway is performed by the non-reducing polyketide synthase pkbA that condenses one acetyl-CoA starter unit with 3 malonyl-CoA units. PkbA also catalyzes one methylation step to produce 3-methylorsellinate. The nonribosomal peptide synthase-like protein cicB, the cytochrome P450 monooxygenase cicH and the O-methyltransferase cicE are involved in the conversion of 3-methylorsellinate into nidulol. CicB converts 3-methylorsellinate to a yet unidentified intermediate, cicH may play a ring-closing role for cichorine and cicE is plausibly responsible for the methylation of one of the phenol groups. The oxidoreductase cicC acts downstream with still unidentified enzymes to further convert nidulol into cichorine. This Emericella nidulans (strain FGSC A4 / ATCC 38163 / CBS 112.46 / NRRL 194 / M139) (Aspergillus nidulans) protein is O-methyltransferase cicE.